A 1002-amino-acid polypeptide reads, in one-letter code: MASSKGGNTTAHINTLHHRLYHALNLGFRVCDEKEKKWKCTDIEIQRHVVKSISAFLDCFSRATANNRLIKDSISDIAGALVFILGSKNRAVVGLAANVVIRLIRIVPPSILHSYSLDLVESLSPLLCCQQFDVSLPCAVALNAILVNVRETKEKEVWKILEDEKTVVSVVGNLQIFSEGSMSVEWFQEMALLLSTIMLKWPQSRYSVWNNPALMGVLESVSQKPDMGLTVATLKLYSSLALCGHGANELLDNGKPMLDMMISCMEESSSQNARIEGLKLAQRLATGNRECLKMINMCSESLVKATVRTMGKWFLSSGKLELDQMSLLVEACKLALITRWEGQHHIYFWKYRISEALLSLVVENFHSQSLDGYVSLEEEVLVAEKVLNANFLPSLRSYVWDIIGFLAAHCEEEFDSILRGDELCLNFLVTCACLSFSRSVQKGYQICQNDIISASHSESASRAVLMMICSPSKYISSRARVTLSFILEEGGEQNLNSLVNFLSYIPSSGGYILPNILQTTVCLVGFACYSSIPQYASFILRKQGLEILLSFCSWYQRNWENIGASSFAPSSQSITEKRICCWVCTEDWDNKDAFLLYALLALAELVNHSFFGQNHAEELSMKSGNLKDRLCTTLKEIRDGTYGSGPRWYAAHILSYFGYYGFEHKLGKRLMCAYEDEEYSDMRLLFASGNSASVNKVIIAVRCPMLLPPKEGAHSSSTISTEKSQRTVQEIRMSANVDILALVKLLEFAYSGYVEVESTTLKKLKPLAKHCKAKVLLQMLCRRRPKWGSSIPEIDIPLALTPKLIHFSDVILVPKETNVACFNCRMCSLTSPHAHSHRVILSSGCEYLRALFRSGMQESHLDRLNVPVSWLGLTKLVSWFYSDELPKPPSGCKWNNMDTEAKLDELQAYVEIYSLSEWWIMEELQNDCAHVILSCLESARELSIKTIELAASFSMWKLVEAAANHAAPIYHQLRDSGELDELDDELVNLIRTAAVQFSQQGG.

BTB domains follow at residues 680 to 758 (SDMR…EVES) and 808 to 889 (SDVI…PKPP).

Its pathway is protein modification; protein ubiquitination. Functionally, may act as a substrate-specific adapter of an E3 ubiquitin-protein ligase complex (CUL3-RBX1-BTB) which mediates the ubiquitination and subsequent proteasomal degradation of target proteins. This Arabidopsis thaliana (Mouse-ear cress) protein is BTB/POZ domain-containing protein At1g04390.